Consider the following 430-residue polypeptide: Tektin-2 (430 aa).

Coiled-coil stretches lie at residues 80–162 (KCLT…FEQL) and 225–382 (NKDR…CKAN).

It belongs to the tektin family. As to quaternary structure, microtubule inner protein component of sperm flagellar doublet microtubules. May interact with CCDC172. Post-translationally, tyrosine phosphorylated. Ubiquitinated, leading to its degradation. Deubiquitinated by USP16, promoting its stability. In terms of tissue distribution, expressed at high levels in testis, trachea and fetal lung, and at lower levels in ovary, pituitary, adult lung, fetal brain and fetal kidney.

It localises to the cytoplasm. The protein resides in the cytoskeleton. It is found in the cilium axoneme. Its subcellular location is the flagellum axoneme. The protein localises to the microtubule organizing center. Functionally, microtubule inner protein (MIP) part of the dynein-decorated doublet microtubules (DMTs) in cilia and flagellar axoneme. Plays a key role in the assembly or attachment of the inner dynein arm to microtubules in sperm flagella and tracheal cilia. Forms filamentous polymers in the walls of ciliary and flagellar microtubules. In Homo sapiens (Human), this protein is Tektin-2.